A 1312-amino-acid polypeptide reads, in one-letter code: Angiotensin-converting enzyme (1312 aa).

An N-terminal signal peptide occupies residues 1–34; it reads MGAASGQRGRWPLSPPLLMLSLLVLLLQPSPAPA. The Extracellular portion of the chain corresponds to 35–1264; it reads LDPGLQPGNF…LEPQQARVGQ (1230 aa). 2 consecutive Peptidase M2 domains span residues 45-629 and 648-1227; these read SPDE…LGWP and ETDE…LGWP. Residues asparagine 59, asparagine 79, asparagine 116, asparagine 151, and asparagine 165 are each glycosylated (N-linked (GlcNAc...) asparagine). A disulfide bond links cysteine 162 and cysteine 170. Position 236 (tyrosine 236) interacts with chloride. Residue asparagine 323 is glycosylated (N-linked (GlcNAc...) asparagine). Cysteine 364 and cysteine 382 are joined by a disulfide. Residue histidine 395 coordinates Zn(2+). Glutamate 396 functions as the Proton acceptor 1 in the catalytic mechanism. Zn(2+) is bound by residues histidine 399 and glutamate 423. Residue asparagine 514 is glycosylated (N-linked (GlcNAc...) asparagine). Histidine 525 functions as the Proton donor 1 in the catalytic mechanism. Arginine 534 is a binding site for chloride. Residues cysteine 550 and cysteine 562 are joined by a disulfide bond. Residue asparagine 682 is glycosylated (N-linked (GlcNAc...) asparagine). N-linked (GlcNAc...) (complex) asparagine glycans are attached at residues asparagine 700 and asparagine 719. The cysteines at positions 762 and 768 are disulfide-linked. Asparagine 765 carries N-linked (GlcNAc...) asparagine glycosylation. Chloride contacts are provided by arginine 796 and tyrosine 834. Asparagine 947 is a glycosylation site (N-linked (GlcNAc...) asparagine). Cysteine 962 and cysteine 980 are joined by a disulfide. Residue histidine 993 coordinates Zn(2+). The Proton acceptor 2 role is filled by glutamate 994. 2 residues coordinate Zn(2+): histidine 997 and glutamate 1021. Chloride-binding residues include tryptophan 1095 and arginine 1099. Residue histidine 1123 is the Proton donor 2 of the active site. Residue arginine 1132 coordinates chloride. An intrachain disulfide couples cysteine 1148 to cysteine 1160. Asparagine 1196 carries N-linked (GlcNAc...) asparagine glycosylation. The interval 1220 to 1261 is juxtamembrane stalk; it reads HGETLGWPEYNWAPNTARAEGSTAESNRVNFLGLYLEPQQAR. The chain crosses the membrane as a helical span at residues 1265-1281; sequence WVLLFLGVALLVATVGL. Residues 1282–1312 lie on the Cytoplasmic side of the membrane; it reads AHRLYNIRNHHSLRRPHRGPQFGSEVELRHS. The residue at position 1305 (serine 1305) is a Phosphoserine.

The protein belongs to the peptidase M2 family. As to quaternary structure, monomer and homodimer; homodimerizes following binding to an inhibitor. Interacts with calmodulin (CALM1, CALM2 or CALM3); interaction takes place in the cytoplasmic region and regulates phosphorylation and proteolytic cleavage. The cofactor is Zn(2+). Chloride serves as cofactor. In terms of processing, produced following proteolytic cleavage by secretase enzymes that cleave the transmembrane form in the juxtamembrane stalk region upstream of the transmembrane region. Cleavage can take place at different sites of the juxtamembrane stalk region. Phosphorylated by CK2 on Ser-1305; which allows membrane retention. Phosphorylated on tyrosine residues on its extracellular part, promoting cleavage by secretase enzymes and formation of the soluble form (Angiotensin-converting enzyme, soluble form). Highly expressed in kidney and lung; not expressed in the liver. In the brain, expressed in the cerebral cortex, hippocampus, cerebellum and basal ganglia/brainstem. Highly expressed in dopamine receptor DRD1-expressing neurons in the dorsal striatum and the nucleus accumbens of the brain. In terms of tissue distribution, specifically expressed in spermatocytes, adult testis.

The protein resides in the cell membrane. It is found in the cytoplasm. It localises to the secreted. The catalysed reaction is Release of a C-terminal dipeptide, oligopeptide-|-Xaa-Yaa, when Xaa is not Pro, and Yaa is neither Asp nor Glu. Thus, conversion of angiotensin I to angiotensin II, with increase in vasoconstrictor activity, but no action on angiotensin II.. It catalyses the reaction angiotensin I + H2O = L-histidyl-L-leucine + angiotensin II. It carries out the reaction bradykinin + H2O = L-Phe-L-Arg + bradykinin(1-7). The enzyme catalyses substance P + H2O = substance P(1-9) + L-Leu-L-Met-NH2. The catalysed reaction is substance P + H2O = substance P(1-8) + Gly-L-Leu-L-Met-NH2. It catalyses the reaction substance P + H2O = L-Phe-L-Phe-Gly-L-Leu-L-Met-NH2 + substance P(1-6). It carries out the reaction neurotensin + H2O = neurotensin(1-11) + L-isoleucyl-L-leucine. The enzyme catalyses goralatide + H2O = N-acetyl-L-seryl-L-aspartate + L-lysyl-L-proline. The catalysed reaction is Met-enkephalin + H2O = L-phenylalanyl-L-methionine + L-tyrosylglycylglycine. It catalyses the reaction Leu-enkephalin + H2O = L-tyrosylglycylglycine + L-phenylalanyl-L-leucine. It carries out the reaction Met-enkephalin-Arg-Phe + H2O = L-arginyl-L-phenylalanine + Met-enkephalin. Its activity is regulated as follows. The dipeptidyl carboxypeptidase activity is specifically inhibited by lisinopril, captopril and enalaprilat. The N-terminal catalytic domain, but not the C-terminal catalytic domain, is specifically inhibited by the phosphinic peptide RXP 407. The putative GPIase activity is nearly insensitive to captopril. Dipeptidyl carboxypeptidase that removes dipeptides from the C-terminus of a variety of circulating hormones, such as angiotensin I, bradykinin or enkephalins, thereby playing a key role in the regulation of blood pressure, electrolyte homeostasis or synaptic plasticity. Composed of two similar catalytic domains, each possessing a functional active site, with different selectivity for substrates. Plays a major role in the angiotensin-renin system that regulates blood pressure and sodium retention by the kidney by converting angiotensin I to angiotensin II, resulting in an increase of the vasoconstrictor activity of angiotensin. Also able to inactivate bradykinin, a potent vasodilator, and therefore enhance the blood pressure response. Acts as a regulator of synaptic transmission by mediating cleavage of neuropeptide hormones, such as substance P, neurotensin or enkephalins. Catalyzes degradation of different enkephalin neuropeptides (Met-enkephalin, Leu-enkephalin, Met-enkephalin-Arg-Phe and possibly Met-enkephalin-Arg-Gly-Leu). Acts as a regulator of synaptic plasticity in the nucleus accumbens of the brain by mediating cleavage of Met-enkephalin-Arg-Phe, a strong ligand of Mu-type opioid receptor OPRM1, into Met-enkephalin. Met-enkephalin-Arg-Phe cleavage by ACE decreases activation of OPRM1, leading to long-term synaptic potentiation of glutamate release. Also acts as a regulator of hematopoietic stem cell differentiation by mediating degradation of hemoregulatory peptide N-acetyl-SDKP (AcSDKP). Acts as a regulator of cannabinoid signaling pathway by mediating degradation of hemopressin, an antagonist peptide of the cannabinoid receptor CNR1. Involved in amyloid-beta metabolism by catalyzing degradation of Amyloid-beta protein 40 and Amyloid-beta protein 42 peptides, thereby preventing plaque formation. Catalyzes cleavage of cholecystokinin (maturation of Cholecystokinin-8 and Cholecystokinin-5) and Gonadoliberin-1 (both maturation and degradation) hormones. Degradation of hemoregulatory peptide N-acetyl-SDKP (AcSDKP) and amyloid-beta proteins is mediated by the N-terminal catalytic domain, while angiotensin I and cholecystokinin cleavage is mediated by the C-terminal catalytic region. Functionally, soluble form that is released in blood plasma and other body fluids following proteolytic cleavage in the juxtamembrane stalk region. In terms of biological role, isoform produced by alternative promoter usage that is specifically expressed in spermatocytes and adult testis, and which is required for male fertility. In contrast to somatic isoforms, only contains one catalytic domain. Acts as a dipeptidyl carboxypeptidase that removes dipeptides from the C-terminus of substrates. The identity of substrates that are needed for male fertility is unknown. Isoform Testis-specific and isoform Somatic have distinct activities and cannot completely compensate for the loss of the other when expressed in somatic tissues or testis. May also have a glycosidase activity which releases GPI-anchored proteins from the membrane by cleaving the mannose linkage in the GPI moiety. The GPIase activity was reported to be essential for the egg-binding ability of the sperm. This activity is however unclear and has been challenged by other groups, suggesting that it may be indirect. This Mus musculus (Mouse) protein is Angiotensin-converting enzyme.